A 404-amino-acid chain; its full sequence is Dual-specificity RNA methyltransferase RlmN (404 aa).

Glu118 serves as the catalytic Proton acceptor. The Radical SAM core domain occupies 125-357 (VGRAGALCVS…NKAGYSSPIR (233 aa)). Cysteines 132 and 368 form a disulfide. 3 residues coordinate [4Fe-4S] cluster: Cys139, Cys143, and Cys146. Residues 194 to 195 (GE), Ser226, 248 to 250 (SLH), and Asn325 each bind S-adenosyl-L-methionine. Cys368 acts as the S-methylcysteine intermediate in catalysis.

The protein belongs to the radical SAM superfamily. RlmN family. Requires [4Fe-4S] cluster as cofactor.

The protein resides in the cytoplasm. It catalyses the reaction adenosine(2503) in 23S rRNA + 2 reduced [2Fe-2S]-[ferredoxin] + 2 S-adenosyl-L-methionine = 2-methyladenosine(2503) in 23S rRNA + 5'-deoxyadenosine + L-methionine + 2 oxidized [2Fe-2S]-[ferredoxin] + S-adenosyl-L-homocysteine. It carries out the reaction adenosine(37) in tRNA + 2 reduced [2Fe-2S]-[ferredoxin] + 2 S-adenosyl-L-methionine = 2-methyladenosine(37) in tRNA + 5'-deoxyadenosine + L-methionine + 2 oxidized [2Fe-2S]-[ferredoxin] + S-adenosyl-L-homocysteine. Specifically methylates position 2 of adenine 2503 in 23S rRNA and position 2 of adenine 37 in tRNAs. m2A2503 modification seems to play a crucial role in the proofreading step occurring at the peptidyl transferase center and thus would serve to optimize ribosomal fidelity. The chain is Dual-specificity RNA methyltransferase RlmN from Caulobacter vibrioides (strain ATCC 19089 / CIP 103742 / CB 15) (Caulobacter crescentus).